We begin with the raw amino-acid sequence, 318 residues long: MMDKRVVAVAAVLWNVQMLFAAGEVIVPEGYASYYAESFNGRPTASGEIFDMNAYTAAHRTLPFGTVVELTNLDNGKKVIVRINDRGPYAANREIDVSKAAAVALDMLNAGVARVSIHKADPNAHASQQRNDRQTSPGVLPQDSFGVPPTAPTSSAPVMYADPHNPPPAPVGRRAGTPGVPGVANTTDVPASEYGAPPVAYAAPGSTPSRVPYGTAVPGSAAPNSHAQPVPSSSSYAAAAPLPYAAGGGKVSGMKSVYTPTHSGETRGVLWRIQLGAFVREENALRLVVKCARRALILHMSEQSTRCAWCCRGYAPRT.

The signal sequence occupies residues 1–21; it reads MMDKRVVAVAAVLWNVQMLFA. Residues 121-191 form a disordered region; it reads DPNAHASQQR…GVANTTDVPA (71 aa). The segment covering 125–137 has biased composition (polar residues); the sequence is HASQQRNDRQTSP.

Belongs to the RlpA family.

Lytic transglycosylase with a strong preference for naked glycan strands that lack stem peptides. This chain is Probable endolytic peptidoglycan transglycosylase RlpA, found in Treponema pallidum (strain Nichols).